The following is a 219-amino-acid chain: Acetylxylan esterase (219 aa).

The Nucleophile role is filled by Ser15. Active-site charge relay system residues include Asp191 and His194.

The protein belongs to the 'GDSL' lipolytic enzyme family. In terms of assembly, homooctamer, presenting a unique donut-shaped quaternary structure built of two staggered tetrameric rings. The eight active sites are organized in four closely situated pairs, which face the relatively wide internal cavity.

It localises to the cytoplasm. The catalysed reaction is Deacetylation of xylans and xylo-oligosaccharides.. It participates in glycan degradation; xylan degradation. Its function is as follows. Acetylxylan esterase involved in the degradation of xylan, a major structural heterogeneous polysaccharide found in plant biomass representing the second most abundant polysaccharide in the biosphere, after cellulose. Cleaves acetyl side groups from the xylose backbone units of the hemicellulolytic polymer xylan and xylo-oligosaccharides. Hydrolyzes about 20%-30% of the available acetyl groups on fully acetylated birch wood xylan. Completely deacetylates xylobiose peracetate (fully acetylated), and is active on both the alpha- and beta-forms of the sugar. Also hydrolyzes fully acetylated methyl-beta-D-xylopyranoside and methyl-beta-D-glucopyranoside, and the synthetic substrates 2-naphthyl acetate, 4-nitrophenyl acetate, 4-methylumbelliferyl acetate, and phenyl acetate. This chain is Acetylxylan esterase, found in Geobacillus stearothermophilus (Bacillus stearothermophilus).